We begin with the raw amino-acid sequence, 372 residues long: Cytoplasmic tRNA 2-thiolation protein 1 (372 aa).

The interval 335–372 (GKKEDGGCGSGGGGCGCAGAADETENEETRKRLKDLQF) is disordered. Gly residues predominate over residues 341-351 (GCGSGGGGCGC). The segment covering 361 to 372 (EETRKRLKDLQF) has biased composition (basic and acidic residues).

Belongs to the TtcA family. CTU1/NCS6/ATPBD3 subfamily.

The protein resides in the cytoplasm. Its pathway is tRNA modification; 5-methoxycarbonylmethyl-2-thiouridine-tRNA biosynthesis. Plays a central role in 2-thiolation of mcm(5)S(2)U at tRNA wobble positions of tRNA(Lys), tRNA(Glu) and tRNA(Gln). Directly binds tRNAs and probably acts by catalyzing adenylation of tRNAs, an intermediate required for 2-thiolation. It is unclear whether it acts as a sulfurtransferase that transfers sulfur from thiocarboxylated URM1 onto the uridine of tRNAs at wobble position. The protein is Cytoplasmic tRNA 2-thiolation protein 1 of Caenorhabditis briggsae.